A 464-amino-acid chain; its full sequence is Sushi-repeat-containing protein SRPX (464 aa).

The N-terminal stretch at 1–30 (MGSPGLRPELLLPQVLPLLLALLHVLPSQG) is a signal peptide. The O-linked (Xyl...) (chondroitin sulfate) serine glycan is linked to serine 34. Cystine bridges form between cysteine 57/cysteine 85, cysteine 69/cysteine 103, cysteine 89/cysteine 115, cysteine 120/cysteine 161, and cysteine 147/cysteine 174. Sushi domains follow at residues 57–117 (CSPI…ICKQ) and 118–176 (KRCP…SCVD). The 83-residue stretch at 177-259 (LEPPRIKCPS…TCKFRVKVRV (83 aa)) folds into the HYR domain. Residues 260 to 319 (RRCGKLNAPENGYMKCSSDGDNYGATCEFSCIGGYELQGSPARVCQSNLAWSGTEPSCAA) form the Sushi 3 domain. Intrachain disulfides connect cysteine 262/cysteine 304 and cysteine 290/cysteine 317.

This Mus musculus (Mouse) protein is Sushi-repeat-containing protein SRPX (Srpx).